The sequence spans 631 residues: MSATKLTRREQRAQAQHFIDTLEGSAFPNSKRIYITATQPGVRVPMREIQLSPTLIGGSKEQPQYEENEAIPVYDTSGPYGDPQIAINVQQGLAKLRQPWIDARGDTEELTVRSSDYTKARLADDGLDELRFSGVLTPKRAKAGRRVTQLHYARQGIITPEMEFIAIRENMGRERIRSEVLRHQHPGMSFGARLPENITAEFVRDEVAAGRAIIPANINHPESEPMIIGRNFLVKVNANIGNSAVTSSIEEEVEKLVWSTRWGADTVMDLSTGRYIHETREWILRNSPVPIGTVPIYQALEKVNGIAEDLTWEVFRDTLLEQAEQGVDYFTIHAGVLLRYVPMTAKRLTGIVSRGGSIMAKWCLSHHQENFLYQHFREICEICAAYDVSLSLGDGLRPGSIQDANDEAQFAELHTLGELTKIAWEYDVQVMIEGPGHVPMQMIRRNMTEELEHCHEAPFYTLGPLTTDIAPGYDHFTSGIGAAMIGWFGCAMLCYVTPKEHLGLPNKEDVKQGLITYKIAAHAADLAKGHPGAQIRDNAMSKARFEFRWEDQFNLALDPFTARAYHDETLPQESGKVAHFCSMCGPKFCSMKISQEVRDYAAAQTIEVGMADMSENFRARGGEIYLRKEEA.

Substrate-binding positions include N239, M268, Y297, H333, 353 to 355 (SRG), 394 to 397 (DGLR), and E433. H437 is a Zn(2+) binding site. Y460 is a binding site for substrate. H501 is a binding site for Zn(2+). 3 residues coordinate [4Fe-4S] cluster: C581, C584, and C589.

The protein belongs to the ThiC family. As to quaternary structure, homodimer. [4Fe-4S] cluster is required as a cofactor.

It carries out the reaction 5-amino-1-(5-phospho-beta-D-ribosyl)imidazole + S-adenosyl-L-methionine = 4-amino-2-methyl-5-(phosphooxymethyl)pyrimidine + CO + 5'-deoxyadenosine + formate + L-methionine + 3 H(+). It participates in cofactor biosynthesis; thiamine diphosphate biosynthesis. Its function is as follows. Catalyzes the synthesis of the hydroxymethylpyrimidine phosphate (HMP-P) moiety of thiamine from aminoimidazole ribotide (AIR) in a radical S-adenosyl-L-methionine (SAM)-dependent reaction. This Escherichia coli O6:H1 (strain CFT073 / ATCC 700928 / UPEC) protein is Phosphomethylpyrimidine synthase.